Consider the following 138-residue polypeptide: Thyrotropin subunit beta (138 aa).

An N-terminal signal peptide occupies residues methionine 1–serine 20. 6 disulfide bridges follow: cysteine 22/cysteine 72, cysteine 36/cysteine 87, cysteine 39/cysteine 125, cysteine 47/cysteine 103, cysteine 51/cysteine 105, and cysteine 108/cysteine 115. A glycan (N-linked (GlcNAc...) asparagine) is linked at asparagine 43. A propeptide spanning residues valine 133 to isoleucine 138 is cleaved from the precursor.

Belongs to the glycoprotein hormones subunit beta family. In terms of assembly, heterodimer of a common alpha chain and a unique beta chain which confers biological specificity to thyrotropin, lutropin, follitropin and gonadotropin.

Its subcellular location is the secreted. Its function is as follows. Indispensable for the control of thyroid structure and metabolism. The polypeptide is Thyrotropin subunit beta (TSHB) (Sus scrofa (Pig)).